We begin with the raw amino-acid sequence, 290 residues long: Poly-beta-1,6-N-acetyl-D-glucosamine N-deacetylase (290 aa).

A signal peptide spans 1–28 (MKYRKLIILVLSILIILPVSTLDGHHIA). Residues 114 to 290 (RSVWINFDDM…KRWDGFHEKD (177 aa)) enclose the NodB homology domain.

It belongs to the polysaccharide deacetylase family.

Its subcellular location is the secreted. It is found in the cell wall. Functionally, catalyzes the N-deacetylation of poly-beta-1,6-N-acetyl-D-glucosamine (PNAG, also referred to as PIA), a biofilm adhesin polysaccharide. N-deacetylation is crucial for attachment of the polysaccharide to the bacterial cell surface; it leads to the introduction of positive charges in the otherwise neutral PIA polymer, allowing electrostatic interactions. This is Poly-beta-1,6-N-acetyl-D-glucosamine N-deacetylase (icaB) from Staphylococcus aureus (strain MRSA252).